Here is a 183-residue protein sequence, read N- to C-terminus: ATP-dependent protease subunit HslV (183 aa).

The active site involves Thr12. Residues Ala166, Cys169, and Thr172 each contribute to the Na(+) site.

This sequence belongs to the peptidase T1B family. HslV subfamily. As to quaternary structure, a double ring-shaped homohexamer of HslV is capped on each side by a ring-shaped HslU homohexamer. The assembly of the HslU/HslV complex is dependent on binding of ATP.

The protein localises to the cytoplasm. The enzyme catalyses ATP-dependent cleavage of peptide bonds with broad specificity.. Its activity is regulated as follows. Allosterically activated by HslU binding. In terms of biological role, protease subunit of a proteasome-like degradation complex believed to be a general protein degrading machinery. In Afipia carboxidovorans (strain ATCC 49405 / DSM 1227 / KCTC 32145 / OM5) (Oligotropha carboxidovorans), this protein is ATP-dependent protease subunit HslV.